A 380-amino-acid polypeptide reads, in one-letter code: Cytochrome b (380 aa).

Transmembrane regions (helical) follow at residues 33–53 (FGSLLGLCLATQILTGLFLAM), 77–98 (WLIRNMHANGASFFFICIYLHI), 113–133 (WNVGVALFLLTMMTAFVGYVL), and 178–198 (FFAFHFLFPFVIAALTAIHLL). 2 residues coordinate heme b: His83 and His97. Heme b contacts are provided by His182 and His196. His201 provides a ligand contact to a ubiquinone. 4 helical membrane passes run 226–246 (YKDLLGFATLMVTLTSLALFS), 288–308 (LGGVLALLSSILILTAVPALH), 320–340 (ITQLLFWTLVAAVLVLTWIGG), and 347–367 (FIIIGQIASLLYFMLFLTLIP).

Belongs to the cytochrome b family. In terms of assembly, the cytochrome bc1 complex contains 3 respiratory subunits (MT-CYB, CYC1 and UQCRFS1), 2 core proteins (UQCRC1 and UQCRC2) and probably 6 low-molecular weight proteins. The cofactor is heme b.

Its subcellular location is the mitochondrion inner membrane. Component of the ubiquinol-cytochrome c reductase complex (complex III or cytochrome b-c1 complex) that is part of the mitochondrial respiratory chain. The b-c1 complex mediates electron transfer from ubiquinol to cytochrome c. Contributes to the generation of a proton gradient across the mitochondrial membrane that is then used for ATP synthesis. This Percopsis transmontana (Sand roller) protein is Cytochrome b (mt-cyb).